A 296-amino-acid polypeptide reads, in one-letter code: CDP-diacylglycerol--glycerol-3-phosphate 3-phosphatidyltransferase 1, chloroplastic/mitochondrial (296 aa).

The N-terminal 39 residues, 1–39, are a transit peptide targeting the chloroplast and mitochondrion; it reads MLRSGLASLIVDVNLRRTLRPSPTFSFPAHLSRCIITSR. A compositionally biased stretch (low complexity) spans 62-82; the sequence is FSSSSSSEQSRPTSSSRNSFS. The tract at residues 62-103 is disordered; that stretch reads FSSSSSSEQSRPTSSSRNSFSGHGQLDSDDNSSPPPSQSSSK. 5 helical membrane passes run 104 to 124, 126 to 146, 164 to 184, 189 to 209, and 261 to 281; these read VLTLPTVLTLGRVAAVPLLVA, FYVDSWWGTTATTSIFIAAAI, FGAFLDPVADKLMVAATLILL, IQVAELGPLPWLLTVPSIAII, and VGWLVASGAGLLYVSAGLSVW.

It belongs to the CDP-alcohol phosphatidyltransferase class-I family. The cofactor is Mn(2+).

It localises to the plastid. The protein resides in the chloroplast membrane. It is found in the mitochondrion membrane. It carries out the reaction a CDP-1,2-diacyl-sn-glycerol + sn-glycerol 3-phosphate = a 1,2-diacyl-sn-glycero-3-phospho-(1'-sn-glycero-3'-phosphate) + CMP + H(+). The protein operates within phospholipid metabolism; phosphatidylglycerol biosynthesis; phosphatidylglycerol from CDP-diacylglycerol: step 1/2. Functionally, catalyzes the committed step to the synthesis of the acidic phospholipids, including phosphatidylglycerol (PG). Transfers specifically a phosphatidyl group from CDP-diacylglycerol to glycerol-3-phosphate to form phosphatidylglycerophosphate. Cannot catalyze the phosphatidyl group transfer to inositol, serine, choline or phosphatidylglycerol. Possesses high activity with CDP-dipalmitoylglycerol and low activity with CDP-dioleoylglycerol. Essential for chloroplast differentiation and PG accumulation in thylakoids, an essential process for the assembly of antenna-reaction center complexes to optimize energy transfer from antenna pigments, and for subsequent photochemical efficiency of photosystem II (PSII). During cold acclimation (at 5 degrees Celsius), necessary for the photosystem I (PSI) photochemistry, including both reaction center and light-harvesting integrity. But dispensable in mitochondrion, being redundant with PGPS2 for the production of PG and its derivative cardiolipin (CL) in mitochondrial membranes. Together with PGPS2, required for the proper embryo development by providing PG accurate levels. This chain is CDP-diacylglycerol--glycerol-3-phosphate 3-phosphatidyltransferase 1, chloroplastic/mitochondrial, found in Arabidopsis thaliana (Mouse-ear cress).